A 505-amino-acid polypeptide reads, in one-letter code: Deoxyguanosinetriphosphate triphosphohydrolase (505 aa).

Residues 66 to 273 (RLTHSMEVQQ…MEAADDISYC (208 aa)) form the HD domain.

Belongs to the dGTPase family. Type 1 subfamily. As to quaternary structure, homotetramer. The cofactor is Mg(2+).

It carries out the reaction dGTP + H2O = 2'-deoxyguanosine + triphosphate + H(+). DGTPase preferentially hydrolyzes dGTP over the other canonical NTPs. This chain is Deoxyguanosinetriphosphate triphosphohydrolase, found in Salmonella arizonae (strain ATCC BAA-731 / CDC346-86 / RSK2980).